We begin with the raw amino-acid sequence, 282 residues long: Armadillo repeat-containing protein 1 (282 aa).

N-acetylmethionine is present on M1. An ARM repeat occupies 39 to 81; sequence GCLPGLILSMDHPNPPVVHSALLALRYLAECRANREKMKGELG. Position 137 is a phosphothreonine (T137). A phosphoserine mark is found at S189, S246, S260, and S267. The interval 239-261 is disordered; the sequence is DYLPEDESPTKEQDKAVSRVGSH. A compositionally biased stretch (basic and acidic residues) spans 246-255; the sequence is SPTKEQDKAV.

As to quaternary structure, interacts with mitochondrial contact site and cristae organizing system (MICOS) complex components IMMT/MIC60 and MICOS10/MIC10. Interacts with mitochondrial outer membrane sorting assembly machinery (SAM) complex components SAMM50 and MTX1.

The protein localises to the cytoplasm. It localises to the mitochondrion. Its subcellular location is the mitochondrion outer membrane. Functionally, in association with mitochondrial contact site and cristae organizing system (MICOS) complex components and mitochondrial outer membrane sorting assembly machinery (SAM) complex components may regulate mitochondrial dynamics playing a role in determining mitochondrial length, distribution and motility. This chain is Armadillo repeat-containing protein 1 (ARMC1), found in Pongo abelii (Sumatran orangutan).